A 381-amino-acid chain; its full sequence is Zinc finger CCCH domain-containing protein 61 (381 aa).

The disordered stretch occupies residues 1–39 (MDVEHHKSGHISRPTVDIPPRKLLSSAKSPSSVSSPLRD). Positions 21-37 (RKLLSSAKSPSSVSSPL) are enriched in low complexity. C3H1-type zinc fingers lie at residues 101–128 (YTGE…HGVF) and 137–159 (YRTE…AHSP).

Interacts with MARD1/FLZ9 and RD21A via its CCCH zing finger domains.

Its subcellular location is the cytoplasm. The protein resides in the stress granule. It localises to the P-body. The protein is Zinc finger CCCH domain-containing protein 61 of Arabidopsis thaliana (Mouse-ear cress).